Reading from the N-terminus, the 261-residue chain is Small ribosomal subunit protein eS1 (261 aa).

The span at 1 to 18 (MAVGKNKRISKGKKGGKK) shows a compositional bias: basic residues. Positions 1 to 22 (MAVGKNKRISKGKKGGKKKAAD) are disordered.

This sequence belongs to the eukaryotic ribosomal protein eS1 family. Component of the small ribosomal subunit. Mature ribosomes consist of a small (40S) and a large (60S) subunit. The 40S subunit contains about 33 different proteins and 1 molecule of RNA (18S). The 60S subunit contains about 49 different proteins and 3 molecules of RNA (25S, 5.8S and 5S).

The protein localises to the cytoplasm. This is Small ribosomal subunit protein eS1 from Cicer arietinum (Chickpea).